Reading from the N-terminus, the 300-residue chain is UDP-N-acetylenolpyruvoylglucosamine reductase (300 aa).

In terms of domain architecture, FAD-binding PCMH-type spans 29-193; sequence TGGPADLLVF…LSATFKLRSG (165 aa). Residue Arg-172 is part of the active site. The Proton donor role is filled by Ser-222. The active site involves Glu-292.

This sequence belongs to the MurB family. FAD serves as cofactor.

It is found in the cytoplasm. The enzyme catalyses UDP-N-acetyl-alpha-D-muramate + NADP(+) = UDP-N-acetyl-3-O-(1-carboxyvinyl)-alpha-D-glucosamine + NADPH + H(+). Its pathway is cell wall biogenesis; peptidoglycan biosynthesis. Functionally, cell wall formation. This Pediococcus pentosaceus (strain ATCC 25745 / CCUG 21536 / LMG 10740 / 183-1w) protein is UDP-N-acetylenolpyruvoylglucosamine reductase.